The sequence spans 860 residues: Leucine--tRNA ligase (860 aa).

Positions Pro42–His52 match the 'HIGH' region motif. The 'KMSKS' region signature appears at Lys619–Ser623. Lys622 is an ATP binding site.

The protein belongs to the class-I aminoacyl-tRNA synthetase family.

It is found in the cytoplasm. The enzyme catalyses tRNA(Leu) + L-leucine + ATP = L-leucyl-tRNA(Leu) + AMP + diphosphate. The polypeptide is Leucine--tRNA ligase (Klebsiella pneumoniae subsp. pneumoniae (strain ATCC 700721 / MGH 78578)).